Reading from the N-terminus, the 369-residue chain is FAD-dependent monooxygenase FPY4 (369 aa).

This sequence belongs to the aromatic-ring hydroxylase family. FAD is required as a cofactor.

The protein operates within secondary metabolite biosynthesis. Its function is as follows. FAD-dependent monooxygenase; part of the gene cluster that mediates the biosynthesis of the gamma-pyrones fusapyrone (FPY) and deoxyfusapyrone (dFPY). FPY is an undecaketide and thus likely synthesized by the polyketide synthase FPY1 from acetyl-CoA functioning as starter unit and the addition of 10 malonyl-CoA extender units by successive Claisen-condensations. Next to this, FPY shares some rare features: C-glycosylated 4-deoxyglucose at C-3, a gem-dimethyl group at C-13, and an alpha-beta to beta-gamma double bond shift at C-20. During FPY biosynthesis mono-C-methyl groups are transferred to the tetra-, penta-, hexa- and heptaketide, while two C-methyl groups are transferred to the nonaketide, suggesting that the CMet domain is programmed to selectively catalyze two successive C-alpha-methylation reactions of the nonaketide, while other alpha-carbons are non- or mono-methylated only. While the origin of the 4'-deoxyglucose moiety remains opaque, its transfer to C-3 is most likely mediated by the C-glycosyltransferase FPY2. Next to this, the hydroxyl group present at C-33 and discriminating between FPY and dFPY, is likely to be installed by the cytochrome P450 monooxygenase FPY7. No putative function can be predicted for the remaining genes FPY3-FPY6. The polypeptide is FAD-dependent monooxygenase FPY4 (Fusarium mangiferae (Mango malformation disease fungus)).